The following is a 265-amino-acid chain: Membrane steroid-binding protein 2 (265 aa).

Residues 63–85 form a helical membrane-spanning segment; the sequence is WAAARSASPVAVIAAVAGAAVVY. The segment at 94 to 116 is disordered; sequence PPPPPARPREEPSEEAPPPPEPV. The Cytochrome b5 heme-binding domain maps to 118-217; it reads VGEITAEELL…SKYVKVGTIK (100 aa). The steroid-binding stretch occupies residues 120 to 217; sequence EITAEELLQY…SKYVKVGTIK (98 aa).

The protein belongs to the cytochrome b5 family. MAPR subfamily.

The protein resides in the cell membrane. In terms of biological role, binds multiple steroid compounds. The protein is Membrane steroid-binding protein 2 of Oryza sativa subsp. japonica (Rice).